We begin with the raw amino-acid sequence, 287 residues long: 4,4'-diapophytoene synthase (287 aa).

(2E,6E)-farnesyl diphosphate-binding positions include 18-21, Y41, and R45; that span reads HSKS. Mg(2+) is bound by residues D48 and D52. Q165 is a (2E,6E)-farnesyl diphosphate binding site. Position 168 (N168) interacts with Mg(2+). R171 provides a ligand contact to (2E,6E)-farnesyl diphosphate. D172 is a binding site for Mg(2+). Y248 is a (2E,6E)-farnesyl diphosphate binding site.

It belongs to the phytoene/squalene synthase family. CrtM subfamily. Mg(2+) is required as a cofactor.

It catalyses the reaction 2 (2E,6E)-farnesyl diphosphate = 15-cis-4,4'-diapophytoene + 2 diphosphate. Its pathway is carotenoid biosynthesis; staphyloxanthin biosynthesis; staphyloxanthin from farnesyl diphosphate: step 1/5. Its function is as follows. Involved in the biosynthesis of the yellow-orange carotenoid staphyloxanthin, which plays a role in the virulence via its protective function against oxidative stress. Catalyzes the head-to-head condensation of two molecules of farnesyl diphosphate (FPP) into the colorless C(30) carotenoid 4,4'-diapophytoene (dehydrosqualene). In Staphylococcus aureus (strain Mu50 / ATCC 700699), this protein is 4,4'-diapophytoene synthase (crtM).